The primary structure comprises 471 residues: Argininosuccinate lyase (471 aa).

Belongs to the lyase 1 family. Argininosuccinate lyase subfamily.

Its subcellular location is the cytoplasm. It carries out the reaction 2-(N(omega)-L-arginino)succinate = fumarate + L-arginine. Its pathway is amino-acid biosynthesis; L-arginine biosynthesis; L-arginine from L-ornithine and carbamoyl phosphate: step 3/3. This chain is Argininosuccinate lyase, found in Deinococcus radiodurans (strain ATCC 13939 / DSM 20539 / JCM 16871 / CCUG 27074 / LMG 4051 / NBRC 15346 / NCIMB 9279 / VKM B-1422 / R1).